The chain runs to 267 residues: U6 snRNA phosphodiesterase 1 (267 aa).

Residues 1 to 72 (MNAAPLVGYS…EDDSARHGGR (72 aa)) are disordered. His122 acts as the Proton acceptor in catalysis. 122 to 124 (HLS) provides a ligand contact to AMP. Residues Gln166, Tyr204, and 208-212 (SFHVS) each bind UMP. Residues Tyr204 and 206–212 (DPSFHVS) each bind AMP. His210 serves as the catalytic Proton donor.

Belongs to the 2H phosphoesterase superfamily. USB1 family. As to quaternary structure, interacts with PLRG1, CDC5L and PRPF19.

The protein localises to the nucleus. The enzyme catalyses a 3'-end uridylyl-uridine-RNA = a 3'-end 2',3'-cyclophospho-uridine-RNA + uridine. It carries out the reaction a 3'-end uridylyl-adenosine-RNA = a 3'-end 2',3'-cyclophospho-uridine-RNA + adenosine. In terms of biological role, 3'-5' RNA exonuclease that trims the 3' end of oligo(U) and oligo(A) tracts of the pre-U6 small nuclear RNA (snRNA) molecule, leading to the formation of a mature U6 snRNA 3' end-terminated with a 2',3'-cyclic phosphate. Participates in the U6 snRNA 3' end processing that prevents U6 snRNA degradation. In addition also removes uridines from the 3' end of U6atac snRNA and possibly the vault RNA VTRNA1-1. This chain is U6 snRNA phosphodiesterase 1, found in Rattus norvegicus (Rat).